We begin with the raw amino-acid sequence, 410 residues long: Phosphoglycerate kinase (410 aa).

Residues 22 to 24 (DIN), Arg39, 62 to 65 (HQSR), Arg119, and Arg159 contribute to the substrate site. Residues Glu332 and 358–361 (GGHL) contribute to the ATP site.

Belongs to the phosphoglycerate kinase family. In terms of assembly, homodimer.

Its subcellular location is the cytoplasm. It catalyses the reaction (2R)-3-phosphoglycerate + ATP = (2R)-3-phospho-glyceroyl phosphate + ADP. It participates in carbohydrate degradation; glycolysis; pyruvate from D-glyceraldehyde 3-phosphate: step 2/5. The protein is Phosphoglycerate kinase (pgk) of Methanothermus fervidus (strain ATCC 43054 / DSM 2088 / JCM 10308 / V24 S).